The primary structure comprises 114 residues: MMYVIIGGAVGACLRFAVSECWLKFGKNAQLMTAVFVINISGCAMLGWILAKPLPEGIELLFISMLGGFTTFSTFCMEALELWRLKKRKQAMIYLVISIVGSLFGFLFGWNVRA.

Transmembrane regions (helical) follow at residues 3 to 23 (YVII…ECWL), 31 to 51 (LMTA…WILA), 57 to 77 (GIEL…TFCM), and 92 to 112 (MIYL…GWNV). Positions 67 and 70 each coordinate Na(+).

This sequence belongs to the fluoride channel Fluc/FEX (TC 1.A.43) family.

Its subcellular location is the cell membrane. The enzyme catalyses fluoride(in) = fluoride(out). Its activity is regulated as follows. Na(+) is not transported, but it plays an essential structural role and its presence is essential for fluoride channel function. Its function is as follows. Fluoride-specific ion channel. Important for reducing fluoride concentration in the cell, thus reducing its toxicity. The protein is Fluoride-specific ion channel FluC 2 of Shouchella clausii (strain KSM-K16) (Alkalihalobacillus clausii).